The sequence spans 595 residues: Estrogen receptor (595 aa).

A modulating (transactivation AF-1); mediates interaction with MACROD1 region spans residues 1–184 (MTMTLHTKAS…AMESAKETRY (184 aa)). Ser10 is a glycosylation site (O-linked (GlcNAc) serine). Residues 35–47 (LERPLGEVYVDSS) are required for interaction with NCOA1. The tract at residues 35 to 174 (LERPLGEVYV…LASTSDKGSM (140 aa)) is interaction with DDX5; self-association. Phosphoserine; by CDK2 occurs at positions 104 and 106. Position 118 is a phosphoserine (Ser118). The disordered stretch occupies residues 144 to 174 (AGPPAFYRPNSDNRRQGGRERLASTSDKGSM). Basic and acidic residues predominate over residues 154 to 165 (SDNRRQGGRERL). Phosphoserine; by CK2 is present on Ser167. NR C4-type zinc fingers lie at residues 185-205 (CAVC…CEGC) and 221-245 (CPAT…LRKC). A DNA-binding region (nuclear receptor) is located at residues 185–250 (CAVCNDYASG…RLRKCYEVGM (66 aa)). The mediates interaction with DNTTIP2 stretch occupies residues 185-310 (CAVCNDYASG…TKKNSPVLSL (126 aa)). The interval 251-310 (MKGGIRKDRRGGRMLKHKRQRDDGEGRNEAVPPGDMRSANLWPSPLLIKHTKKNSPVLSL) is hinge. Basic residues predominate over residues 257-269 (KDRRGGRMLKHKR). The tract at residues 257–288 (KDRRGGRMLKHKRQRDDGEGRNEAVPPGDMRS) is disordered. Asymmetric dimethylarginine; by PRMT1 is present on Arg260. The segment at 262 to 595 (GRMLKHKRQR…GEAENFPTTI (334 aa)) is interaction with AKAP13. The tract at residues 264–594 (MLKHKRQRDD…TGEAENFPTT (331 aa)) is self-association. One can recognise an NR LBD domain in the interval 311 to 547 (TADQMISALL…DLLLEMLDAH (237 aa)). Residues 311–594 (TADQMISALL…TGEAENFPTT (284 aa)) are transactivation AF-2. 2 residues coordinate 17beta-estradiol: Glu353 and Arg394. Cys447 carries the S-palmitoyl cysteine lipid modification. His524 contributes to the 17beta-estradiol binding site. Phosphotyrosine; by Tyr-kinases is present on Tyr537. A disordered region spans residues 551-575 (APTNLGGPPPEDMSQSQLATSGSTP). The span at 563–575 (MSQSQLATSGSTP) shows a compositional bias: polar residues.

The protein belongs to the nuclear hormone receptor family. NR3 subfamily. In terms of assembly, binds DNA as a homodimer. Can form a heterodimer with ESR2. Interacts with coactivator NCOA5. Interacts with PELP1, the interaction is enhanced by 17-beta-estradiol; the interaction increases ESR1 transcriptional activity. Interacts with NCOA7; the interaction is ligand-inducible. Interacts with AKAP13, CUEDC2, HEXIM1, KDM5A, MAP1S, SMARD1, and UBE1C. Interacts with MUC1; the interaction is stimulated by 7 beta-estradiol (E2) and enhances ESR1-mediated transcription. Interacts with DNTTIP2, and UIMC1. Interacts with KMT2D/MLL2. Interacts with ATAD2; the interaction is enhanced by estradiol. Interacts with KIF18A and LDB1. Interacts with RLIM (via its C-terminus). Interacts with MACROD1. Interacts with SH2D4A and PLCG. Interacts with SH2D4A; the interaction blocks binding to PLCG and inhibits estrogen-induced cell proliferation. Interacts with DYNLL1. Interacts with CCDC62; the interaction requires estradiol and appears to enhance the transcription of target genes. Interacts with NR2C1; the interaction prevents homodimerization of ESR1 and suppresses its transcriptional activity and cell growth. Interacts with DNAAF4. Interacts with PRMT2. Interacts with RBFOX2. Interacts with EP300; the interaction is estrogen-dependent and enhanced by CITED1. Interacts with CITED1; the interaction is estrogen-dependent. Interacts with FAM120B, FOXL2, PHB2 and SLC30A9. Interacts with coactivators NCOA3 and NCOA6. Interacts with STK3/MST2 only in the presence of SAV1 and vice-versa. Binds to CSNK1D. Interacts with NCOA2; NCOA2 can interact with ESR1 AF-1 and AF-2 domains simultaneously and mediate their transcriptional synergy. Interacts with DDX5. Interacts with NCOA1; the interaction seems to require a self-association of N-terminal and C-terminal regions. Interacts with ZNF366, DDX17, NFKB1, RELA, SP1 and SP3. Interacts with NRIP1. Interacts with GPER1; the interaction occurs in an estrogen-dependent manner. Interacts with CLOCK and the interaction is stimulated by estrogen. Interacts with TRIP4 (ufmylated); estrogen dependent. Interacts with LMTK3; the interaction phosphorylates ESR1 (in vitro) and protects it against proteasomal degradation. Interacts with CCAR2 (via N-terminus) in a ligand-independent manner. Interacts with ZFHX3. Interacts with SFR1 in a ligand-dependent and -independent manner. Interacts with DCAF13, LATS1 and DCAF1; regulates ESR1 ubiquitination and ubiquitin-mediated proteasomal degradation. Interacts (via DNA-binding domain) with POU4F2 (C-terminus); this interaction increases the estrogen receptor ESR1 transcriptional activity in a DNA- and ligand 17-beta-estradiol-independent manner. Interacts with ESRRB isoform 1. Interacts with UBE3A and WBP2. Interacts with GTF2B. Interacts with RBM39. In the absence of hormonal ligand, interacts with TACC1. Interacts with PI3KR1 or PI3KR2 and PTK2/FAK1. Interacts with SRC. Interacts with BAG1; the interaction is promoted in the absence of estradiol (17-beta-estradiol/E2). Interacts with and ubiquitinated by STUB1; the interaction is promoted in the absence of estradiol (17-beta-estradiol/E2). Interacts with NEDD8. Phosphorylated by cyclin A/CDK2 and CK1. Phosphorylation probably enhances transcriptional activity. Dephosphorylation at Ser-118 by PPP5C inhibits its transactivation activity. Phosphorylated by LMTK3 (in vitro). In terms of processing, ubiquitinated; regulated by LATS1 via DCAF1 it leads to ESR1 proteasomal degradation. Deubiquitinated by OTUB1. Ubiquitinated by STUB1/CHIP; in the CA1 hippocampal region following loss of endogenous circulating estradiol (17-beta-estradiol/E2). Ubiquitinated by UBR5, leading to its degradation: UBR5 specifically recognizes and binds ligand-bound ESR1 when it is not associated with coactivators (NCOAs). In presence of NCOAs, the UBR5-degron is not accessible, preventing its ubiquitination and degradation. Post-translationally, palmitoylated at Cys-447 by ZDHHC7 and ZDHHC21. Palmitoylation is required for plasma membrane targeting and for rapid intracellular signaling via ERK and AKT kinases and cAMP generation, but not for signaling mediated by the nuclear hormone receptor. Dimethylated by PRMT1 at Arg-260. The methylation may favor cytoplasmic localization. Demethylated by JMJD6 at Arg-260.

It localises to the nucleus. The protein resides in the cytoplasm. The protein localises to the golgi apparatus. Its subcellular location is the cell membrane. In terms of biological role, nuclear hormone receptor. The steroid hormones and their receptors are involved in the regulation of eukaryotic gene expression and affect cellular proliferation and differentiation in target tissues. Ligand-dependent nuclear transactivation involves either direct homodimer binding to a palindromic estrogen response element (ERE) sequence or association with other DNA-binding transcription factors, such as AP-1/c-Jun, c-Fos, ATF-2, Sp1 and Sp3, to mediate ERE-independent signaling. Ligand binding induces a conformational change allowing subsequent or combinatorial association with multiprotein coactivator complexes through LXXLL motifs of their respective components. Mutual transrepression occurs between the estrogen receptor (ER) and NF-kappa-B in a cell-type specific manner. Decreases NF-kappa-B DNA-binding activity and inhibits NF-kappa-B-mediated transcription from the IL6 promoter and displace RELA/p65 and associated coregulators from the promoter. Recruited to the NF-kappa-B response element of the CCL2 and IL8 promoters and can displace CREBBP. Present with NF-kappa-B components RELA/p65 and NFKB1/p50 on ERE sequences. Can also act synergistically with NF-kappa-B to activate transcription involving respective recruitment adjacent response elements; the function involves CREBBP. Can activate the transcriptional activity of TFF1. Also mediates membrane-initiated estrogen signaling involving various kinase cascades. Essential for MTA1-mediated transcriptional regulation of BRCA1 and BCAS3. Maintains neuronal survival in response to ischemic reperfusion injury when in the presence of circulating estradiol (17-beta-estradiol/E2). The protein is Estrogen receptor (ESR1) of Sus scrofa (Pig).